The following is an 86-amino-acid chain: Small ribosomal subunit protein bS20 (86 aa).

The segment covering 1 to 16 (MANIKSQEKRIRTNER) has biased composition (basic and acidic residues). Positions 1–25 (MANIKSQEKRIRTNERRRLRNQSVK) are disordered.

Belongs to the bacterial ribosomal protein bS20 family.

In terms of biological role, binds directly to 16S ribosomal RNA. The protein is Small ribosomal subunit protein bS20 of Mycobacterium sp. (strain JLS).